The sequence spans 410 residues: L-sorbose 1-phosphate reductase (410 aa).

Cysteine 40, histidine 69, and glutamate 70 together coordinate Zn(2+). NAD(+) contacts are provided by residues arginine 221 and 309–310; that span reads GT.

This sequence belongs to the zinc-containing alcohol dehydrogenase family. Requires Zn(2+) as cofactor.

Reduces L-sorbose 1-phosphate to D-glucitol 6-phosphate. In Klebsiella pneumoniae, this protein is L-sorbose 1-phosphate reductase (sorE).